A 370-amino-acid polypeptide reads, in one-letter code: MPAITVKPLTPPAGSAIDFGAVITDVDLEHLTDGDFSTIRSALYTHLVVVLKNQHQLTPKAQYELTRRFDPSATQYGHGKTLDAKRSILHPDLKTIPHQPQVQVIGHGFIDSYEGLENITLKHPHHRTFHRDPIPQEDDYDSTRFYRWHIDAALYGLNPPIVTTLLAVKVPGGRRQTVRYDDGSGETMDVPLGTTAFASGERMFELLSEEDKEFALSSRVEYAPHPYIWMSPARSLPTGLGLHSDDLELPLSELPPIDESAIQILPMVWKNPATGKPALQIHPSAVRKIHCGDGTVIDDLKKVREIAYKLQRPAISPQYVYAHDWEEGDLVLFHNRGVLHSVVGAFGEGEVRLFRQCNLAAGEGVVPYRE.

His107 serves as a coordination point for substrate. The Fe cation site is built by His149 and Asp151. 2 residues coordinate 2-oxoglutarate: Thr195 and Trp325. His340 lines the Fe cation pocket. Arg352 contributes to the 2-oxoglutarate binding site.

This sequence belongs to the TfdA dioxygenase family. The cofactor is Fe(2+). In terms of processing, glycosylated. Is subject to both N- and O-linked glycosylation. Phosphorylated.

The protein resides in the cytoplasm. The protein localises to the cytosol. The enzyme catalyses xanthine + 2-oxoglutarate + O2 = urate + succinate + CO2. Its activity is regulated as follows. Cu(2+) and Zn(2+) completely inhibit the xanthine dioxygenase activity, whereas Co(2+), Mn(2+), and Ni(2+) partially inhibit the activity. The inactive metal ions are presumed to compete for the Fe(2+)-binding site. N-oxalylglycine (NOG), a known inhibitor of several Fe(2+)/alpha-ketoglutarate-dependent dioxygenase family members, competes with alpha-ketoglutarate and provides a Ki of 0.12 uM for inhibition. 6,8-dihydroxypurine acts as a slow-binding competitive inhibitor. The thiol-specific inhibitors 5,5'-dithiobis(2-nitrobenzoic acid) (DTNB) and iodoacetamide, inhibit also the catalytic activity. In terms of biological role, alpha-ketoglutarate-dependent xanthine dioxygenase is a non-heme mononuclear Fe(2+) enzyme that decarboxylates alpha-ketoglutarate to succinate and CO(2) while hydroxylating xanthine to generate uric acid. Allows xanthine utilization as a nitrogen source. Whereas xanA is highly specific for xanthine, alpha-ketoadipic acid can replace alpha-ketoglutarate as a cosubstrate. Exhibits ferroxidase activity in the absence of substrates. This Emericella nidulans (Aspergillus nidulans) protein is Alpha-ketoglutarate-dependent xanthine dioxygenase xanA.